Here is a 147-residue protein sequence, read N- to C-terminus: Bis(5'-nucleosyl)-tetraphosphatase [asymmetrical] (147 aa).

Position 2 is an N-acetylalanine (alanine 2). One can recognise a Nudix hydrolase domain in the interval 2 to 139; it reads ALRACGLIIF…EMKAALQEGH (138 aa). The Nudix box signature appears at 43 to 64; it reads GHVEPGESDLETALRETQEEAG.

Belongs to the Nudix hydrolase family. It depends on a divalent metal cation as a cofactor.

It catalyses the reaction P(1),P(4)-bis(5'-guanosyl) tetraphosphate + H2O = GMP + GTP + 2 H(+). It carries out the reaction a 5'-end CoA-ribonucleoside in mRNA + H2O = a 5'-end phospho-adenosine-phospho-ribonucleoside in mRNA + (R)-4'-phosphopantetheine + 2 H(+). The catalysed reaction is a 5'-end FAD-phospho-ribonucleoside in mRNA + H2O = a 5'-end phospho-adenosine-phospho-ribonucleoside in mRNA + FMN + 2 H(+). In terms of biological role, catalyzes the asymmetric hydrolysis of diadenosine 5',5'''-P1,P4-tetraphosphate (Ap4A) to yield AMP and ATP. Exhibits decapping activity towards FAD-capped RNAs and dpCoA-capped RNAs in vitro. This Bos taurus (Bovine) protein is Bis(5'-nucleosyl)-tetraphosphatase [asymmetrical] (NUDT2).